The chain runs to 316 residues: Serpentine receptor class delta-45 (316 aa).

The next 7 helical transmembrane spans lie at 8–28, 42–62, 91–111, 128–148, 184–204, 234–254, and 266–286; these read VFYP…IFII, ILLV…LIQI, YFLT…TIYL, VTFF…SLIL, IIIT…GLLL, LQVF…LVLA, and FFSV…LYSV.

It belongs to the nematode receptor-like protein srd family.

It is found in the membrane. This chain is Serpentine receptor class delta-45 (srd-45), found in Caenorhabditis elegans.